Reading from the N-terminus, the 392-residue chain is Basic salivary proline-rich protein 1 (392 aa).

A signal peptide spans Met-1 to Ala-16. Gln-17 is subject to Pyrrolidone carboxylic acid. The segment covering Leu-19–Ser-28 has biased composition (polar residues). The interval Leu-19–Gln-392 is disordered. The span at Gly-34–Pro-47 shows a compositional bias: low complexity. At Ser-40 the chain carries Phosphoserine; alternate. Ser-40 is a glycosylation site (O-linked (Hex) serine; alternate). The span at Gln-48–Gln-83 shows a compositional bias: pro residues. 15 tandem repeats follow at residues Pro-53–Pro-72, Pro-73–Ser-92, Pro-93–Pro-112, Pro-114–Pro-133, Pro-134–Ser-153, Pro-154–Pro-173, Pro-175–Pro-194, Pro-195–Ser-214, Pro-215–Pro-234, Pro-236–Pro-255, Pro-256–Ser-275, Pro-276–Pro-295, Pro-297–Pro-316, Pro-317–Arg-336, and Pro-338–Pro-357. A 15 X 20 AA approximate tandem repeats of P-P-G-K-P-Q-G-P-P-[PAQ]-Q-[GE]-[GD]-[NKS]-[KSQRN]-[PRQS]-[QS] [GPS]-[PQAR]-[PSR] region spans residues Pro-53–Pro-357. Ser-87 is a glycosylation site (O-linked (HexNAc...) serine). Over residues Arg-91–Gln-144 the composition is skewed to pro residues. Position 92 is a phosphoserine (Ser-92). Residue Ser-150 is modified to Phosphoserine; alternate. The O-linked (Hex) serine; alternate glycan is linked to Ser-150. 4 stretches are compositionally biased toward pro residues: residues Arg-152 to Gln-205, Arg-213 to Pro-243, Gln-252 to Gln-266, and Gln-274 to Pro-324. The segment covering Pro-325 to Ser-334 has biased composition (low complexity). Ser-330 is a glycosylation site (O-linked (HexNAc...) serine). A compositionally biased stretch (pro residues) spans Gln-354–Gln-392.

O-glycosylated. O-glycosylation on Ser-87 is prevalent in head and neck cancer patients. O-Glycosylation on Ser-330 has a 5 times prevalence in head and neck cancers. In terms of processing, proteolytically cleaved at the tripeptide Xaa-Pro-Gln, where Xaa in the P(3) position is mostly lysine. The endoprotease may be of microbial origin. Post-translationally, pyroglutamate formation occurs on terminal Gln residues of cleaved peptides. Besides on the N-terminal of mature PBR1, pyroglutamate formation found on at least Gln-58.

The protein resides in the secreted. This Homo sapiens (Human) protein is Basic salivary proline-rich protein 1 (PRB1).